A 72-amino-acid polypeptide reads, in one-letter code: Large ribosomal subunit protein bL31 (72 aa).

Residues Cys16, Cys18, Cys37, and Cys40 each contribute to the Zn(2+) site.

This sequence belongs to the bacterial ribosomal protein bL31 family. Type A subfamily. As to quaternary structure, part of the 50S ribosomal subunit. The cofactor is Zn(2+).

Its function is as follows. Binds the 23S rRNA. The protein is Large ribosomal subunit protein bL31 of Hahella chejuensis (strain KCTC 2396).